Here is a 428-residue protein sequence, read N- to C-terminus: Probable protein phosphatase 2C 5 (428 aa).

The PPM-type phosphatase domain occupies 25–297; that stretch reads RSEKVEKPFV…DDTTCVVVDI (273 aa). Residues D73, G74, D249, and D288 each coordinate Mn(2+).

It belongs to the PP2C family. Mg(2+) serves as cofactor. Mn(2+) is required as a cofactor.

It catalyses the reaction O-phospho-L-seryl-[protein] + H2O = L-seryl-[protein] + phosphate. It carries out the reaction O-phospho-L-threonyl-[protein] + H2O = L-threonyl-[protein] + phosphate. This chain is Probable protein phosphatase 2C 5, found in Arabidopsis thaliana (Mouse-ear cress).